The primary structure comprises 78 residues: Large ribosomal subunit protein bL28 (78 aa).

Belongs to the bacterial ribosomal protein bL28 family.

The protein is Large ribosomal subunit protein bL28 of Legionella pneumophila (strain Paris).